The sequence spans 291 residues: Cytochrome c-552 (291 aa).

A signal peptide spans 1–23 (MKKTLMASAVGAVIAFGTHGAMA). Residues Cys68, Cys71, His72, Cys157, Cys161, and His162 each contribute to the heme c site.

In terms of processing, binds 2 heme c groups per subunit.

The protein localises to the periplasm. Its function is as follows. May play a role in nitrite reduction. Shows peroxidase activity on proteolytic modification. The protein is Cytochrome c-552 (nirB) of Stutzerimonas stutzeri (Pseudomonas stutzeri).